The following is a 229-amino-acid chain: Flagellar L-ring protein (229 aa).

The first 25 residues, 1-25 (MKQVRLLPSAPVRAVCALAVAALAG), serve as a signal peptide directing secretion. Cys26 carries N-palmitoyl cysteine lipidation. The S-diacylglycerol cysteine moiety is linked to residue Cys26.

Belongs to the FlgH family. The basal body constitutes a major portion of the flagellar organelle and consists of four rings (L,P,S, and M) mounted on a central rod.

The protein localises to the cell outer membrane. The protein resides in the bacterial flagellum basal body. Functionally, assembles around the rod to form the L-ring and probably protects the motor/basal body from shearing forces during rotation. The polypeptide is Flagellar L-ring protein (Burkholderia ambifaria (strain MC40-6)).